Here is a 586-residue protein sequence, read N- to C-terminus: Methionine--tRNA ligase, mitochondrial (586 aa).

The N-terminal 46 residues, 1-46 (MLRQCARWVLTRTRFGRGCRRYGSCSPSASGDAGEARAYFTTPIFY), are a transit peptide targeting the mitochondrion. Positions 45-55 (FYVNAAPHIGH) match the 'HIGH' region motif. The 'KMSKS' region motif lies at 340-344 (KMSKS). Lys-343 contacts ATP.

Belongs to the class-I aminoacyl-tRNA synthetase family.

It localises to the mitochondrion matrix. The catalysed reaction is tRNA(Met) + L-methionine + ATP = L-methionyl-tRNA(Met) + AMP + diphosphate. The protein is Methionine--tRNA ligase, mitochondrial (Mars2) of Mus musculus (Mouse).